The following is a 177-amino-acid chain: Protein GrpE (177 aa).

This sequence belongs to the GrpE family. In terms of assembly, homodimer.

It is found in the cytoplasm. Participates actively in the response to hyperosmotic and heat shock by preventing the aggregation of stress-denatured proteins, in association with DnaK and GrpE. It is the nucleotide exchange factor for DnaK and may function as a thermosensor. Unfolded proteins bind initially to DnaJ; upon interaction with the DnaJ-bound protein, DnaK hydrolyzes its bound ATP, resulting in the formation of a stable complex. GrpE releases ADP from DnaK; ATP binding to DnaK triggers the release of the substrate protein, thus completing the reaction cycle. Several rounds of ATP-dependent interactions between DnaJ, DnaK and GrpE are required for fully efficient folding. This Thermus thermophilus (strain ATCC BAA-163 / DSM 7039 / HB27) protein is Protein GrpE.